Here is a 404-residue protein sequence, read N- to C-terminus: NADH-quinone oxidoreductase subunit D 2 (404 aa).

Belongs to the complex I 49 kDa subunit family. As to quaternary structure, NDH-1 is composed of 14 different subunits. Subunits NuoB, C, D, E, F, and G constitute the peripheral sector of the complex.

The protein localises to the cell inner membrane. The enzyme catalyses a quinone + NADH + 5 H(+)(in) = a quinol + NAD(+) + 4 H(+)(out). Its function is as follows. NDH-1 shuttles electrons from NADH, via FMN and iron-sulfur (Fe-S) centers, to quinones in the respiratory chain. The immediate electron acceptor for the enzyme in this species is believed to be ubiquinone. Couples the redox reaction to proton translocation (for every two electrons transferred, four hydrogen ions are translocated across the cytoplasmic membrane), and thus conserves the redox energy in a proton gradient. This Sinorhizobium medicae (strain WSM419) (Ensifer medicae) protein is NADH-quinone oxidoreductase subunit D 2.